Consider the following 176-residue polypeptide: Nucleoside triphosphate/diphosphate phosphatase (176 aa).

Residue arginine 23 is the Proton donor of the active site. Residues asparagine 87, aspartate 103, aspartate 105, aspartate 107, aspartate 120, and glutamate 123 each coordinate Mg(2+).

This sequence belongs to the Ntdp family. It depends on Mg(2+) as a cofactor.

The catalysed reaction is a ribonucleoside 5'-triphosphate + H2O = a ribonucleoside 5'-diphosphate + phosphate + H(+). The enzyme catalyses a ribonucleoside 5'-diphosphate + H2O = a ribonucleoside 5'-phosphate + phosphate + H(+). Its function is as follows. Has nucleoside phosphatase activity towards nucleoside triphosphates and nucleoside diphosphates. In Bacillus cereus (strain G9842), this protein is Nucleoside triphosphate/diphosphate phosphatase.